A 328-amino-acid chain; its full sequence is Probable GDP-L-fucose synthase 1 (328 aa).

Residue 25-31 (GHRGLVG) coordinates NADP(+). Y152 serves as the catalytic Proton donor/acceptor. NADP(+) contacts are provided by residues K156, 179–182 (PTNL), and H195. Residues R203, W218, R225, and D285 each contribute to the substrate site.

The protein belongs to the NAD(P)-dependent epimerase/dehydratase family. Fucose synthase subfamily. As to quaternary structure, homodimer.

The catalysed reaction is GDP-beta-L-fucose + NADP(+) = GDP-4-dehydro-alpha-D-rhamnose + NADPH + H(+). It participates in nucleotide-sugar biosynthesis; GDP-L-fucose biosynthesis via de novo pathway; GDP-L-fucose from GDP-alpha-D-mannose: step 2/2. Functionally, catalyzes the two-step NADP-dependent conversion of GDP-4-dehydro-6-deoxy-D-mannose to GDP-fucose, involving an epimerase and a reductase reaction. This chain is Probable GDP-L-fucose synthase 1, found in Oryza sativa subsp. japonica (Rice).